A 148-amino-acid polypeptide reads, in one-letter code: MLRLLSKRFYCKIATKSNEKATKLYFKQLTHPTKVPQTPVDAEFPDTSASEIQIDTKTIQLLERLSLVDLDSERALATLKSSIQFADKIAHINTDHVRPLYTVLEHQQLQLRNDQVTEGDCRAEVLQNAKVTDEDYYVSPPGNIPLEQ.

Belongs to the GatC family. In terms of assembly, subunit of the heterotrimeric GatCAB amidotransferase (AdT) complex, composed of A, B and C subunits.

Its subcellular location is the mitochondrion. It carries out the reaction L-glutamyl-tRNA(Gln) + L-glutamine + ATP + H2O = L-glutaminyl-tRNA(Gln) + L-glutamate + ADP + phosphate + H(+). Allows the formation of correctly charged Gln-tRNA(Gln) through the transamidation of misacylated Glu-tRNA(Gln) in the mitochondria. The reaction takes place in the presence of glutamine and ATP through an activated gamma-phospho-Glu-tRNA(Gln). In Drosophila sechellia (Fruit fly), this protein is Glutamyl-tRNA(Gln) amidotransferase subunit C, mitochondrial.